The primary structure comprises 398 residues: Arylacetamide deacetylase (398 aa).

At 1 to 5 the chain is on the cytoplasmic side; the sequence is MGKTI. Residues 6 to 26 form a helical; Signal-anchor for type II membrane protein membrane-spanning segment; sequence SLLISVVLVAYYLYIPLPDAI. At 27-398 the chain is on the lumenal side; it reads EEPWKVVWET…QYLSWLIKNL (372 aa). The Involved in the stabilization of the negatively charged intermediate by the formation of the oxyanion hole signature appears at 110–112; the sequence is HGG. The cysteines at positions 115 and 339 are disulfide-linked. The active site involves S188. N-linked (GlcNAc...) asparagine glycosylation occurs at N281. Active-site residues include D342 and H372.

The protein belongs to the 'GDXG' lipolytic enzyme family. In terms of processing, N-glycosylated. As to expression, highest levels in liver with lower levels in jejunum and kidney.

The protein resides in the endoplasmic reticulum membrane. The protein localises to the microsome membrane. It carries out the reaction a triacylglycerol + H2O = a diacylglycerol + a fatty acid + H(+). Functionally, displays cellular triglyceride lipase activity in liver, increases the levels of intracellular fatty acids derived from the hydrolysis of newly formed triglyceride stores and plays a role in very low-density lipoprotein assembly. Displays serine esterase activity in liver. Deacetylates a variety of arylacetamide substrates, including xenobiotic compounds and procarcinogens, converting them to the primary arylamide compounds and increasing their toxicity. The protein is Arylacetamide deacetylase (Aadac) of Mus musculus (Mouse).